A 274-amino-acid chain; its full sequence is Guanylyl cyclase 1 (274 aa).

In terms of assembly, functions both as monomer and homooligomer. Mg(2+) serves as cofactor.

The enzyme catalyses GTP = 3',5'-cyclic GMP + diphosphate. It participates in nucleotide metabolism. Functionally, magnesium-dependent guanylyl cyclase that catalyzes the formation of guanosine 3',5'-cyclic monophosphate (cGMP) from guanosine 5'-triphosphate (GTP). Can also use ATP as substrate with a low activity. This Arabidopsis thaliana (Mouse-ear cress) protein is Guanylyl cyclase 1.